The following is a 1343-amino-acid chain: DNA-directed RNA polymerase subunit beta (1343 aa).

Belongs to the RNA polymerase beta chain family. As to quaternary structure, the RNAP catalytic core consists of 2 alpha, 1 beta, 1 beta' and 1 omega subunit. When a sigma factor is associated with the core the holoenzyme is formed, which can initiate transcription.

It carries out the reaction RNA(n) + a ribonucleoside 5'-triphosphate = RNA(n+1) + diphosphate. In terms of biological role, DNA-dependent RNA polymerase catalyzes the transcription of DNA into RNA using the four ribonucleoside triphosphates as substrates. This chain is DNA-directed RNA polymerase subunit beta, found in Shewanella sediminis (strain HAW-EB3).